The following is a 652-amino-acid chain: Zinc finger protein 432 (652 aa).

One can recognise a KRAB domain in the interval 8-79 (LTLEDVTVEF…EDERHSRICP (72 aa)). Residue tyrosine 41 is modified to 3'-nitrotyrosine. ADP-ribosylserine occurs at positions 139 and 164. C2H2-type zinc fingers lie at residues 205–227 (HVCSECGKAFVKKSQLTDHERVH), 233–255 (YGCTLCAKVFSRKSRLNEHQRIH), 261–283 (FICSECGKVFTMKSRLIEHQRTH), 289–311 (YICNECGKGFPGKRNLIVHQRNH), 317–339 (YICSECGKGFTGKSMLIIHQRTH), 345–367 (YICSECGKGFTTKHYVIIHQRNH), 373–395 (YICNECGKGFTMKSRMIEHQRTH), 401–423 (YICSECGKGFPRKSNLIVHQRNH), 429–451 (YLCSECGKGFTVKSMLIIHQRTH), 457–479 (YTCSECGKGFPLKSRLIVHQRTH), 485–507 (YRCSECGKGFIVNSGLMLHQRTH), 513–535 (YICNECGKGFAFKSNLVVHQRTH), 541–563 (FMCSECGKGFTMKRYLIVHQQIH), 567–591 (KSCICSECGRGFAKETELALHKQVH), 597–619 (YGCNECGKGFTMKSRLIVHQRTH), and 625–647 (FVCSECRKAFSSKRNLIVHQRTH). The residue at position 246 (serine 246) is an ADP-ribosylserine. Serine 330 carries the ADP-ribosylserine modification. An ADP-ribosylserine modification is found at serine 414.

Belongs to the krueppel C2H2-type zinc-finger protein family. In terms of assembly, interacts with PARP1 and several chromatin remodeling proteins; the interaction with PARP1 reshapes ZNF432 interacting proteins. Interacts with TRIM28; the interaction is independent of PARP1.

The protein localises to the nucleus. Functionally, homologous recombination repressor that functions as a poly(ADP-ribose) (PAR) reader regulating DNA damage response and PARP inhibition. Once recruited to DNA lesions via DNA-, in a PAR-dependent mechanism, stimulates PARP1 activity. Binds preferentially ssDNA and inhibits EXO1-mediated resection, probably through a PAR-independent DNA-binding mechanism. In Homo sapiens (Human), this protein is Zinc finger protein 432.